The sequence spans 381 residues: MMKKSICCALLLTASFSTFAAAKTEQQIADIVNRTITPLMQEQAIPGMAVAIIYEGKPYYFTWGKADIANNHPVTQQTLFELGSVSKTFNGVLGGDRIARGEIKLSDPVTKYWPELTGKQWRGISLLHLATYTAGGLPLQIPGDVTDKAELLRFYQNWQPQWTPGAKRLYANSSIGLFGALAVKSSGMSYEEAMTRRVLQPLKLAHTWITVPQSEQKNYAWGYLEGKPVHVSPGQLDAEAYGVKSSVIDMARWVQANMDASHVQEKTLQQGIELAQSRYWRIGDMYQGLGWEMLNWPLKADSIINGSDSKVALAALPAVEVNPPAPAVKASWVHKTGSTGGFGSYVAFVPEKNLGIVMLANKSYPNPARVEAAWRILEKLQ.

The signal sequence occupies residues 1–20 (MMKKSICCALLLTASFSTFA). Ser84 acts as the Acyl-ester intermediate in catalysis. Tyr170 serves as the catalytic Proton acceptor. 335–337 (KTG) contacts substrate.

Belongs to the class-C beta-lactamase family.

It localises to the periplasm. It carries out the reaction a beta-lactam + H2O = a substituted beta-amino acid. Sulbactam is an effective progressive inhibitor but a poor competitive inhibitor. Its function is as follows. This protein is a serine beta-lactamase with a substrate specificity for cephalosporins. This chain is Beta-lactamase (ampC), found in Citrobacter freundii.